The sequence spans 354 residues: Rhodopsin (354 aa).

The Extracellular segment spans residues 1-36; it reads MNGTEGPYFYVPMVNTTGIVRSPYEYPQYYLVSPAA. Residues Asn-2 and Asn-15 are each glycosylated (N-linked (GlcNAc...) asparagine). A helical transmembrane segment spans residues 37–61; it reads YACLGAYMFFLILVGFPVNFLTLYV. The Cytoplasmic segment spans residues 62–73; sequence TIEHKKLRTPLN. A helical membrane pass occupies residues 74–96; it reads YILLNLAVADLFMVFGGFTTTIY. Topologically, residues 97-110 are extracellular; it reads TSMHGYFVLGRLGC. The cysteines at positions 110 and 187 are disulfide-linked. A helical transmembrane segment spans residues 111 to 133; it reads NLEGYFATLGGEIGLWSLVVLAV. Residues 134-136 carry the 'Ionic lock' involved in activated form stabilization motif; sequence ERW. The Cytoplasmic portion of the chain corresponds to 134–152; that stretch reads ERWLVVCKPISNFRFTENH. The chain crosses the membrane as a helical span at residues 153 to 173; that stretch reads AIMGLVFTWIMANACAAPPLL. At 174–202 the chain is on the extracellular side; it reads GWSRYIPEGMQCSCGVDYYTRAEGFNNES. The chain crosses the membrane as a helical span at residues 203–224; that stretch reads FVIYMFICHFCIPLVVVFFCYG. Residues 225-252 are Cytoplasmic-facing; the sequence is RLLCAVKEAAAAQQESETTQRAEREVTR. A helical membrane pass occupies residues 253–274; that stretch reads MVVILVIGFLVCWTPYASVAWY. The Extracellular segment spans residues 275-286; sequence IFSNQGSEFGPL. A helical transmembrane segment spans residues 287–308; it reads FMTIPAFFAKSSSIYNPMIYIC. Position 296 is an N6-(retinylidene)lysine (Lys-296). Over 309 to 354 the chain is Cytoplasmic; that stretch reads MNKQFRHCMITTLCCGKNPFEEEEGASTTASKTEASSVSSSSVSPA. Residues Cys-322 and Cys-323 are each lipidated (S-palmitoyl cysteine). A disordered region spans residues 333–354; sequence GASTTASKTEASSVSSSSVSPA. The span at 334–354 shows a compositional bias: low complexity; the sequence is ASTTASKTEASSVSSSSVSPA.

It belongs to the G-protein coupled receptor 1 family. Opsin subfamily. In terms of processing, phosphorylated on some or all of the serine and threonine residues present in the C-terminal region. Contains one covalently linked retinal chromophore.

The protein localises to the membrane. It localises to the cell projection. Its subcellular location is the cilium. It is found in the photoreceptor outer segment. Photoreceptor required for image-forming vision at low light intensity. While most salt water fish species use retinal as chromophore, most freshwater fish use 3-dehydroretinal, or a mixture of retinal and 3-dehydroretinal. Light-induced isomerization of 11-cis to all-trans retinal triggers a conformational change that activates signaling via G-proteins. Subsequent receptor phosphorylation mediates displacement of the bound G-protein alpha subunit by arrestin and terminates signaling. The protein is Rhodopsin (rho) of Gambusia affinis (Western mosquitofish).